The sequence spans 338 residues: tRNA-specific 2-thiouridylase MnmA (338 aa).

Residues 6–13 (LMSGGIDS) and Met32 each bind ATP. Cys87 acts as the Nucleophile in catalysis. Cys87 and Cys185 form a disulfide bridge. Gly111 is a binding site for ATP. The interval 135-137 (KDQ) is interaction with tRNA. The active-site Cysteine persulfide intermediate is Cys185. An interaction with tRNA region spans residues 288–289 (RY).

This sequence belongs to the MnmA/TRMU family.

The protein localises to the cytoplasm. The enzyme catalyses S-sulfanyl-L-cysteinyl-[protein] + uridine(34) in tRNA + AH2 + ATP = 2-thiouridine(34) in tRNA + L-cysteinyl-[protein] + A + AMP + diphosphate + H(+). Its function is as follows. Catalyzes the 2-thiolation of uridine at the wobble position (U34) of tRNA, leading to the formation of s(2)U34. The protein is tRNA-specific 2-thiouridylase MnmA of Syntrophomonas wolfei subsp. wolfei (strain DSM 2245B / Goettingen).